A 78-amino-acid polypeptide reads, in one-letter code: RNA-binding protein Hfq (78 aa).

In terms of domain architecture, Sm spans 9-69; the sequence is DHFLNQLRKE…ISTFAPQRNV (61 aa).

Belongs to the Hfq family. As to quaternary structure, homohexamer.

In terms of biological role, RNA chaperone that binds small regulatory RNA (sRNAs) and mRNAs to facilitate mRNA translational regulation in response to envelope stress, environmental stress and changes in metabolite concentrations. Also binds with high specificity to tRNAs. The chain is RNA-binding protein Hfq from Halalkalibacterium halodurans (strain ATCC BAA-125 / DSM 18197 / FERM 7344 / JCM 9153 / C-125) (Bacillus halodurans).